We begin with the raw amino-acid sequence, 581 residues long: Glutamyl-tRNA reductase (581 aa).

Residues 49-52, Ser109, 114-116, and Gln120 each bind substrate; these read TCNR and EGQ. Residue Cys50 is the Nucleophile of the active site. 192–197 contributes to the NADP(+) binding site; sequence GAGSMS. Residues 292–416 are insert; that stretch reads PAVEDTAVQE…AEAPRPQPVL (125 aa).

The protein belongs to the glutamyl-tRNA reductase family. Homodimer.

It carries out the reaction (S)-4-amino-5-oxopentanoate + tRNA(Glu) + NADP(+) = L-glutamyl-tRNA(Glu) + NADPH + H(+). The protein operates within porphyrin-containing compound metabolism; protoporphyrin-IX biosynthesis; 5-aminolevulinate from L-glutamyl-tRNA(Glu): step 1/2. In terms of biological role, catalyzes the NADPH-dependent reduction of glutamyl-tRNA(Glu) to glutamate 1-semialdehyde (GSA). This is Glutamyl-tRNA reductase from Streptomyces coelicolor (strain ATCC BAA-471 / A3(2) / M145).